Here is a 387-residue protein sequence, read N- to C-terminus: Acetylserotonin O-methyltransferase (387 aa).

Residues Tyr-153, Trp-170, Glu-216, Gly-246–Phe-248, and Arg-263 contribute to the S-adenosyl-L-methionine site. The active-site Proton donor/acceptor is the His-266. Residues Asp-267 and Gln-317 each coordinate substrate. Residues Ala-354–Asp-387 are disordered. Over residues Arg-356–Asp-370 the composition is skewed to gly residues.

It belongs to the class I-like SAM-binding methyltransferase superfamily. Cation-independent O-methyltransferase family. In terms of assembly, homodimer. As to expression, expressed predominantly in the pineal gland (at protein level). Very low expression, if any, in the retina.

The catalysed reaction is N-acetylserotonin + S-adenosyl-L-methionine = melatonin + S-adenosyl-L-homocysteine + H(+). The protein operates within aromatic compound metabolism; melatonin biosynthesis; melatonin from serotonin: step 1/2. Its function is as follows. Catalyzes the transfer of a methyl group onto N-acetylserotonin, producing melatonin (N-acetyl-5-methoxytryptamine). This chain is Acetylserotonin O-methyltransferase (Asmt), found in Mus musculus (Mouse).